Here is a 187-residue protein sequence, read N- to C-terminus: Threonylcarbamoyl-AMP synthase (187 aa).

The region spanning 4–187 (TLDLDRAVAT…DARSGQILRD (184 aa)) is the YrdC-like domain.

It belongs to the SUA5 family. TsaC subfamily.

It localises to the cytoplasm. The catalysed reaction is L-threonine + hydrogencarbonate + ATP = L-threonylcarbamoyladenylate + diphosphate + H2O. In terms of biological role, required for the formation of a threonylcarbamoyl group on adenosine at position 37 (t(6)A37) in tRNAs that read codons beginning with adenine. Catalyzes the conversion of L-threonine, HCO(3)(-)/CO(2) and ATP to give threonylcarbamoyl-AMP (TC-AMP) as the acyladenylate intermediate, with the release of diphosphate. The chain is Threonylcarbamoyl-AMP synthase from Xanthomonas euvesicatoria pv. vesicatoria (strain 85-10) (Xanthomonas campestris pv. vesicatoria).